Reading from the N-terminus, the 304-residue chain is Deoxyribonuclease-1-like 1 (304 aa).

The N-terminal stretch at 1 to 24 (MPYMAMHGLTVALLLIFLAGGTEA) is a signal peptide. Residue N92 is glycosylated (N-linked (GlcNAc...) asparagine). Residue E103 is part of the active site. N123 carries N-linked (GlcNAc...) asparagine glycosylation. The active site involves H154. C193 and C230 form a disulfide bridge. N229 carries N-linked (GlcNAc...) asparagine glycosylation.

The protein belongs to the DNase I family.

Its subcellular location is the endoplasmic reticulum. This is Deoxyribonuclease-1-like 1 (DNASE1L1) from Cricetulus griseus (Chinese hamster).